The chain runs to 320 residues: Malate dehydrogenase (320 aa).

NAD(+) is bound by residues 10-15 (GAGMIG) and Asp34. Substrate is bound by residues Arg83 and Arg89. Residues Asn96 and 119–121 (ITN) each bind NAD(+). 2 residues coordinate substrate: Asn121 and Arg152. The Proton acceptor role is filled by His176.

The protein belongs to the LDH/MDH superfamily. MDH type 3 family.

It catalyses the reaction (S)-malate + NAD(+) = oxaloacetate + NADH + H(+). In terms of biological role, catalyzes the reversible oxidation of malate to oxaloacetate. This is Malate dehydrogenase from Caulobacter sp. (strain K31).